Reading from the N-terminus, the 311-residue chain is 4-hydroxy-3-methylbut-2-enyl diphosphate reductase (311 aa).

A [4Fe-4S] cluster-binding site is contributed by Cys12. Positions 43 and 81 each coordinate (2E)-4-hydroxy-3-methylbut-2-enyl diphosphate. His43 and His81 together coordinate dimethylallyl diphosphate. The isopentenyl diphosphate site is built by His43 and His81. Cys103 lines the [4Fe-4S] cluster pocket. His131 serves as a coordination point for (2E)-4-hydroxy-3-methylbut-2-enyl diphosphate. His131 serves as a coordination point for dimethylallyl diphosphate. His131 lines the isopentenyl diphosphate pocket. Glu133 functions as the Proton donor in the catalytic mechanism. (2E)-4-hydroxy-3-methylbut-2-enyl diphosphate is bound at residue Thr170. [4Fe-4S] cluster is bound at residue Cys198. 3 residues coordinate (2E)-4-hydroxy-3-methylbut-2-enyl diphosphate: Ser226, Asn228, and Ser271. Dimethylallyl diphosphate is bound by residues Ser226, Asn228, and Ser271. The isopentenyl diphosphate site is built by Ser226, Asn228, and Ser271.

The protein belongs to the IspH family. It depends on [4Fe-4S] cluster as a cofactor.

The enzyme catalyses isopentenyl diphosphate + 2 oxidized [2Fe-2S]-[ferredoxin] + H2O = (2E)-4-hydroxy-3-methylbut-2-enyl diphosphate + 2 reduced [2Fe-2S]-[ferredoxin] + 2 H(+). It catalyses the reaction dimethylallyl diphosphate + 2 oxidized [2Fe-2S]-[ferredoxin] + H2O = (2E)-4-hydroxy-3-methylbut-2-enyl diphosphate + 2 reduced [2Fe-2S]-[ferredoxin] + 2 H(+). Its pathway is isoprenoid biosynthesis; dimethylallyl diphosphate biosynthesis; dimethylallyl diphosphate from (2E)-4-hydroxy-3-methylbutenyl diphosphate: step 1/1. It participates in isoprenoid biosynthesis; isopentenyl diphosphate biosynthesis via DXP pathway; isopentenyl diphosphate from 1-deoxy-D-xylulose 5-phosphate: step 6/6. Functionally, catalyzes the conversion of 1-hydroxy-2-methyl-2-(E)-butenyl 4-diphosphate (HMBPP) into a mixture of isopentenyl diphosphate (IPP) and dimethylallyl diphosphate (DMAPP). Acts in the terminal step of the DOXP/MEP pathway for isoprenoid precursor biosynthesis. In Brevibacillus brevis (strain 47 / JCM 6285 / NBRC 100599), this protein is 4-hydroxy-3-methylbut-2-enyl diphosphate reductase.